Here is a 147-residue protein sequence, read N- to C-terminus: MKVILQKDVKDVGRVGELVNVSEGFARNFLFPRKLAAEATEKRVKEYEHLQRVAEAKKKKALAERQELLNKINGTTVTFKLAAGDTDKLFGTVTTTDISKELQKMGHSIDRRDIHLEEPIKVLGQHKAVVRYAEGMEAKIQIAVERA.

It belongs to the bacterial ribosomal protein bL9 family.

Its function is as follows. Binds to the 23S rRNA. This is Large ribosomal subunit protein bL9 from Bdellovibrio bacteriovorus (strain ATCC 15356 / DSM 50701 / NCIMB 9529 / HD100).